The following is a 291-amino-acid chain: Bifunctional protein FolD 1 (291 aa).

NADP(+) is bound by residues 167–169 (GAS), I192, and I233.

It belongs to the tetrahydrofolate dehydrogenase/cyclohydrolase family. In terms of assembly, homodimer.

It carries out the reaction (6R)-5,10-methylene-5,6,7,8-tetrahydrofolate + NADP(+) = (6R)-5,10-methenyltetrahydrofolate + NADPH. The catalysed reaction is (6R)-5,10-methenyltetrahydrofolate + H2O = (6R)-10-formyltetrahydrofolate + H(+). The protein operates within one-carbon metabolism; tetrahydrofolate interconversion. Functionally, catalyzes the oxidation of 5,10-methylenetetrahydrofolate to 5,10-methenyltetrahydrofolate and then the hydrolysis of 5,10-methenyltetrahydrofolate to 10-formyltetrahydrofolate. In Pseudomonas putida (strain ATCC 47054 / DSM 6125 / CFBP 8728 / NCIMB 11950 / KT2440), this protein is Bifunctional protein FolD 1.